The sequence spans 231 residues: ATP phosphoribosyltransferase (231 aa).

Belongs to the ATP phosphoribosyltransferase family. Short subfamily. As to quaternary structure, heteromultimer composed of HisG and HisZ subunits.

It is found in the cytoplasm. It catalyses the reaction 1-(5-phospho-beta-D-ribosyl)-ATP + diphosphate = 5-phospho-alpha-D-ribose 1-diphosphate + ATP. It participates in amino-acid biosynthesis; L-histidine biosynthesis; L-histidine from 5-phospho-alpha-D-ribose 1-diphosphate: step 1/9. Catalyzes the condensation of ATP and 5-phosphoribose 1-diphosphate to form N'-(5'-phosphoribosyl)-ATP (PR-ATP). Has a crucial role in the pathway because the rate of histidine biosynthesis seems to be controlled primarily by regulation of HisG enzymatic activity. The polypeptide is ATP phosphoribosyltransferase (Brucella suis (strain ATCC 23445 / NCTC 10510)).